Consider the following 262-residue polypeptide: Hydroxyethylthiazole kinase (262 aa).

A substrate-binding site is contributed by Met50. ATP contacts are provided by Arg125 and Thr171. A substrate-binding site is contributed by Gly198.

The protein belongs to the Thz kinase family. The cofactor is Mg(2+).

The enzyme catalyses 5-(2-hydroxyethyl)-4-methylthiazole + ATP = 4-methyl-5-(2-phosphooxyethyl)-thiazole + ADP + H(+). It participates in cofactor biosynthesis; thiamine diphosphate biosynthesis; 4-methyl-5-(2-phosphoethyl)-thiazole from 5-(2-hydroxyethyl)-4-methylthiazole: step 1/1. Catalyzes the phosphorylation of the hydroxyl group of 4-methyl-5-beta-hydroxyethylthiazole (THZ). This is Hydroxyethylthiazole kinase from Escherichia coli O139:H28 (strain E24377A / ETEC).